The chain runs to 487 residues: 3-octaprenyl-4-hydroxybenzoate carboxy-lyase (487 aa).

Asn172 is a Mn(2+) binding site. Prenylated FMN is bound by residues 175–177 (IYR), 189–191 (RWL), and 194–195 (RG). Residue Glu238 participates in Mn(2+) binding. Residue Asp287 is the Proton donor of the active site.

The protein belongs to the UbiD family. Homohexamer. The cofactor is prenylated FMN. It depends on Mn(2+) as a cofactor.

The protein resides in the cell membrane. It catalyses the reaction a 4-hydroxy-3-(all-trans-polyprenyl)benzoate + H(+) = a 2-(all-trans-polyprenyl)phenol + CO2. It functions in the pathway cofactor biosynthesis; ubiquinone biosynthesis. Catalyzes the decarboxylation of 3-octaprenyl-4-hydroxy benzoate to 2-octaprenylphenol, an intermediate step in ubiquinone biosynthesis. In Actinobacillus pleuropneumoniae serotype 7 (strain AP76), this protein is 3-octaprenyl-4-hydroxybenzoate carboxy-lyase.